A 333-amino-acid polypeptide reads, in one-letter code: MARVAINGFGRIGRLVYRIIYERKNPDIEVVAINDLTDTKTLAHLLKYDSVHKKFPGKVEYTENSLIVDGKEIKVFAEPDPSKLPWKDLGVDFVIESTGVFRNREKAELHLQAGAKKVIITAPAKGEDITVVIGCNEDQLKPEHTIISCASCTTNSIAPIVKVLHEKFGIVSGMLTTVHSYTNDQRVLDLPHKDLRRARAAAVNIIPTTTGAAKAVALVVPEVKGKLDGMAIRVPTPDGSITDLTVLVEKETTVEEVNAVMKEATEGRLKGIIGYNDEPIVSSDIIGTTFSGIFDATITNVIGGKLVKVASWYDNEYGYSNRVVDTLELLLKM.

NAD(+)-binding positions include 11-12 (RI), aspartate 35, and threonine 121. D-glyceraldehyde 3-phosphate contacts are provided by residues 151–153 (SCT) and threonine 182. Cysteine 152 functions as the Nucleophile in the catalytic mechanism. Asparagine 183 contacts NAD(+). Residues arginine 197, 210 to 211 (TG), and arginine 233 contribute to the D-glyceraldehyde 3-phosphate site. Asparagine 315 lines the NAD(+) pocket.

It belongs to the glyceraldehyde-3-phosphate dehydrogenase family. Homotetramer.

It localises to the cytoplasm. The enzyme catalyses D-glyceraldehyde 3-phosphate + phosphate + NAD(+) = (2R)-3-phospho-glyceroyl phosphate + NADH + H(+). It functions in the pathway carbohydrate degradation; glycolysis; pyruvate from D-glyceraldehyde 3-phosphate: step 1/5. In terms of biological role, catalyzes the oxidative phosphorylation of glyceraldehyde 3-phosphate (G3P) to 1,3-bisphosphoglycerate (BPG) using the cofactor NAD. The first reaction step involves the formation of a hemiacetal intermediate between G3P and a cysteine residue, and this hemiacetal intermediate is then oxidized to a thioester, with concomitant reduction of NAD to NADH. The reduced NADH is then exchanged with the second NAD, and the thioester is attacked by a nucleophilic inorganic phosphate to produce BPG. The polypeptide is Glyceraldehyde-3-phosphate dehydrogenase (gap) (Thermotoga maritima (strain ATCC 43589 / DSM 3109 / JCM 10099 / NBRC 100826 / MSB8)).